The following is a 251-amino-acid chain: tRNA (guanine-N(1)-)-methyltransferase (251 aa).

S-adenosyl-L-methionine contacts are provided by residues glycine 117 and 137 to 142 (IGDYVL).

This sequence belongs to the RNA methyltransferase TrmD family. As to quaternary structure, homodimer.

It is found in the cytoplasm. It catalyses the reaction guanosine(37) in tRNA + S-adenosyl-L-methionine = N(1)-methylguanosine(37) in tRNA + S-adenosyl-L-homocysteine + H(+). In terms of biological role, specifically methylates guanosine-37 in various tRNAs. In Actinobacillus pleuropneumoniae serotype 5b (strain L20), this protein is tRNA (guanine-N(1)-)-methyltransferase.